Consider the following 289-residue polypeptide: ATP synthase gamma chain (289 aa).

Belongs to the ATPase gamma chain family. As to quaternary structure, F-type ATPases have 2 components, CF(1) - the catalytic core - and CF(0) - the membrane proton channel. CF(1) has five subunits: alpha(3), beta(3), gamma(1), delta(1), epsilon(1). CF(0) has three main subunits: a, b and c.

It localises to the cell inner membrane. In terms of biological role, produces ATP from ADP in the presence of a proton gradient across the membrane. The gamma chain is believed to be important in regulating ATPase activity and the flow of protons through the CF(0) complex. The sequence is that of ATP synthase gamma chain from Janthinobacterium sp. (strain Marseille) (Minibacterium massiliensis).